A 366-amino-acid chain; its full sequence is Ribosomal RNA large subunit methyltransferase M (366 aa).

S-adenosyl-L-methionine contacts are provided by residues S188, 221–224 (CPGG), D240, D260, and D277. K306 (proton acceptor) is an active-site residue.

The protein belongs to the class I-like SAM-binding methyltransferase superfamily. RNA methyltransferase RlmE family. RlmM subfamily. As to quaternary structure, monomer.

It is found in the cytoplasm. It carries out the reaction cytidine(2498) in 23S rRNA + S-adenosyl-L-methionine = 2'-O-methylcytidine(2498) in 23S rRNA + S-adenosyl-L-homocysteine + H(+). Catalyzes the 2'-O-methylation at nucleotide C2498 in 23S rRNA. This chain is Ribosomal RNA large subunit methyltransferase M, found in Salmonella dublin (strain CT_02021853).